A 921-amino-acid chain; its full sequence is Collagen alpha-1(IX) chain (921 aa).

The signal sequence occupies residues 1-23 (MKNFWKISVFFCVCSCLGPWVSA). Positions 24-268 (TLKRRARFPA…ITTSQTTDER (245 aa)) are nonhelical region (NC4). Disulfide bonds link C44/C242 and C198/C252. The Laminin G-like domain occupies 50–244 (GQDDLPGFDL…LQWMLIHCDP (195 aa)). D213, D215, and H253 together coordinate Zn(2+). 2 disordered regions span residues 253–759 (HELP…APTD) and 783–921 (RPDT…GPDK). Collagen-like domains are found at residues 269-325 (GPPG…PGAD), 326-356 (GLTGPDGSPGSVGPRGQKGEPGVPGSRGFPG), 358-403 (GIPG…GTIG), 416-472 (PPGR…GLRG), 473-512 (ITGIVGDKGEKGARGFDGEPGPQGIPGAAGDQGQRGPPGE), 604-656 (GKPG…LPGP), 657-711 (PGLP…PGEP), and 712-755 (GLRG…PPGR). A triple-helical region (COL3) region spans residues 269-405 (GPPGEQGPPG…PGPSGTIGFH (137 aa)). Pro residues-rich tracts occupy residues 273–285 (EQGPPGPPGPPGV) and 298–310 (KGPPGPPGPPGDP). A compositionally biased stretch (low complexity) spans 368–383 (TTGLPGELGRVGPIGD). The segment covering 387-398 (RGPPGPPGPPGP) has biased composition (pro residues). Positions 406–417 (DGDPLCPNSCPP) are nonhelical region (NC3). Residues 418 to 756 (GRSGYPGLPG…PGIQGPPGRA (339 aa)) are triple-helical region (COL2). Positions 479–489 (DKGEKGARGFD) are enriched in basic and acidic residues. Low complexity-rich tracts occupy residues 594–632 (PGKPGQLGSSGKPGQQGPPGEVGPRGPRGLPGSRGPVGP) and 639–650 (PGKLGSVGSPGL). The tract at residues 757-786 (PTDQHIKQVCMRVVQEHFVEMAASLKRPDT) is nonhelical region (NC2). The triple-helical region (COL1) stretch occupies residues 787-901 (GASGLPGRPG…PGPPGPPGFC (115 aa)). Residues 790 to 847 (GLPGRPGPPGPPGPPGENGFPGQMGIRGLPGIKGPPGALGLRGPKGDLGEKGERGPPG) form the Collagen-like 9 domain. Over residues 794-804 (RPGPPGPPGPP) the composition is skewed to pro residues. A compositionally biased stretch (basic and acidic residues) spans 833–845 (PKGDLGEKGERGP). The segment covering 888-900 (VPGPPGPPGPPGF) has biased composition (pro residues). Residues 902-921 (EPASCTLQSGQRAFSKGPDK) form a nonhelical region (NC1) region.

This sequence belongs to the fibril-associated collagens with interrupted helices (FACIT) family. Heterotrimer of an alpha 1(IX), an alpha 2(IX) and an alpha 3(IX) chain. Covalently linked to the telopeptides of type II collagen by lysine-derived cross-links. Post-translationally, prolines at the third position of the tripeptide repeating unit (G-X-Y) are hydroxylated in some or all of the chains.

The protein localises to the secreted. The protein resides in the extracellular space. Its subcellular location is the extracellular matrix. Its function is as follows. Structural component of hyaline cartilage and vitreous of the eye. The polypeptide is Collagen alpha-1(IX) chain (Col9a1) (Mus musculus (Mouse)).